We begin with the raw amino-acid sequence, 454 residues long: Bifunctional protein GlmU (454 aa).

The pyrophosphorylase stretch occupies residues 1–231; that stretch reads MDRATVSLIV…EAETLGVNTR (231 aa). UDP-N-acetyl-alpha-D-glucosamine-binding positions include 11 to 14, Lys25, Gln78, 83 to 84, 106 to 108, Gly143, Glu157, Asn172, and Asn229; these read LAAG, GT, and YGD. Asp108 is a Mg(2+) binding site. Asn229 is a binding site for Mg(2+). Positions 232 to 252 are linker; that stretch reads AQLAEAEAEFQKRARAAALED. Residues 253–454 are N-acetyltransferase; that stretch reads GVTLTAPDTV…AKAAKKKEAP (202 aa). Residues Arg318 and Lys336 each contribute to the UDP-N-acetyl-alpha-D-glucosamine site. The active-site Proton acceptor is the His348. The UDP-N-acetyl-alpha-D-glucosamine site is built by Tyr351 and Asn362. Acetyl-CoA-binding positions include Ala365, 371-372, Ser390, Ser408, and Arg425; that span reads NY.

The protein in the N-terminal section; belongs to the N-acetylglucosamine-1-phosphate uridyltransferase family. This sequence in the C-terminal section; belongs to the transferase hexapeptide repeat family. In terms of assembly, homotrimer. Mg(2+) is required as a cofactor.

The protein resides in the cytoplasm. The enzyme catalyses alpha-D-glucosamine 1-phosphate + acetyl-CoA = N-acetyl-alpha-D-glucosamine 1-phosphate + CoA + H(+). It catalyses the reaction N-acetyl-alpha-D-glucosamine 1-phosphate + UTP + H(+) = UDP-N-acetyl-alpha-D-glucosamine + diphosphate. The protein operates within nucleotide-sugar biosynthesis; UDP-N-acetyl-alpha-D-glucosamine biosynthesis; N-acetyl-alpha-D-glucosamine 1-phosphate from alpha-D-glucosamine 6-phosphate (route II): step 2/2. It functions in the pathway nucleotide-sugar biosynthesis; UDP-N-acetyl-alpha-D-glucosamine biosynthesis; UDP-N-acetyl-alpha-D-glucosamine from N-acetyl-alpha-D-glucosamine 1-phosphate: step 1/1. It participates in bacterial outer membrane biogenesis; LPS lipid A biosynthesis. Its function is as follows. Catalyzes the last two sequential reactions in the de novo biosynthetic pathway for UDP-N-acetylglucosamine (UDP-GlcNAc). The C-terminal domain catalyzes the transfer of acetyl group from acetyl coenzyme A to glucosamine-1-phosphate (GlcN-1-P) to produce N-acetylglucosamine-1-phosphate (GlcNAc-1-P), which is converted into UDP-GlcNAc by the transfer of uridine 5-monophosphate (from uridine 5-triphosphate), a reaction catalyzed by the N-terminal domain. The polypeptide is Bifunctional protein GlmU (Cereibacter sphaeroides (strain ATCC 17023 / DSM 158 / JCM 6121 / CCUG 31486 / LMG 2827 / NBRC 12203 / NCIMB 8253 / ATH 2.4.1.) (Rhodobacter sphaeroides)).